Here is a 179-residue protein sequence, read N- to C-terminus: Insulin-like growth factor 2 (179 aa).

Residues 1 to 24 (MGITAGKSMLALLAFLAFASCCYA) form the signal peptide. A b region spans residues 25-52 (AYRPSETLCGGELVDTLQFVCGDRGFYF). 3 cysteine pairs are disulfide-bonded: C33/C71, C45/C84, and C70/C75. Residues 53–64 (SRPSSRINRRSR) form a c region. The a stretch occupies residues 65–85 (GIVEECCFRSCDLALLETYCA). Positions 86–91 (APAKSE) are d. A propeptide spans 92 to 179 (RDVSASTTVL…GGASSEASSD (88 aa)) (e peptide). O-linked (GalNAc...) threonine glycosylation occurs at T106. The O-linked (GalNAc...) serine glycan is linked to S154. Residues 160–179 (ALPTQDPATHGGASSEASSD) are disordered. T163 carries an O-linked (GalNAc...) threonine glycan.

It belongs to the insulin family. As to quaternary structure, interacts with MYORG; this interaction is required for IGF2 secretion. Interacts with integrins ITGAV:ITGB3 and ITGA6:ITGB4; integrin-binding is required for IGF2 signaling. Interacts with IGFBP2. In terms of processing, proteolytically processed by PCSK4, proIGF2 is cleaved at Arg-128 and Arg-92 to generate big-IGF2 and mature IGF2.

It is found in the secreted. The insulin-like growth factors possess growth-promoting activity. Major fetal growth hormone in mammals. Plays a key role in regulating fetoplacental development. IGF2 is influenced by placental lactogen. Also involved in tissue differentiation. In adults, involved in glucose metabolism in adipose tissue, skeletal muscle and liver. Acts as a ligand for integrin which is required for IGF2 signaling. Positively regulates myogenic transcription factor MYOD1 function by facilitating the recruitment of transcriptional coactivators, thereby controlling muscle terminal differentiation. Inhibits myoblast differentiation and modulates metabolism via increasing the mitochondrial respiration rate. In terms of biological role, preptin undergoes glucose-mediated co-secretion with insulin, and acts as a physiological amplifier of glucose-mediated insulin secretion. Exhibits osteogenic properties by increasing osteoblast mitogenic activity through phosphoactivation of MAPK1 and MAPK3. The protein is Insulin-like growth factor 2 of Ovis aries (Sheep).